A 385-amino-acid chain; its full sequence is Methionine aminopeptidase 1 (385 aa).

The C6H2-type zinc-finger motif lies at 6–59; that stretch reads SRVCETEGCSSEAKLQCPTCIKLGIQGSYFCSQECFKGSWASHKLLHKKAKDDK. 8 residues coordinate Zn(2+): cysteine 9, cysteine 14, cysteine 22, cysteine 25, cysteine 36, cysteine 40, histidine 48, and histidine 52. An a protein-binding site is contributed by histidine 203. Residues aspartate 220, aspartate 231, and histidine 294 each contribute to the Zn(2+) site. Position 301 (histidine 301) interacts with a protein. Zn(2+) contacts are provided by glutamate 327 and glutamate 358.

The protein belongs to the peptidase M24A family. Methionine aminopeptidase type 1 subfamily. Associates with the 60S ribosomal subunit of the 80S translational complex. The cofactor is Zn(2+). It depends on Co(2+) as a cofactor. Mn(2+) serves as cofactor. Requires Fe(2+) as cofactor.

It is found in the cytoplasm. The catalysed reaction is Release of N-terminal amino acids, preferentially methionine, from peptides and arylamides.. Functionally, cotranslationally removes the N-terminal methionine from nascent proteins. The N-terminal methionine is often cleaved when the second residue in the primary sequence is small and uncharged (Met-Ala-, Cys, Gly, Pro, Ser, Thr, or Val). The protein is Methionine aminopeptidase 1 (metap1) of Xenopus tropicalis (Western clawed frog).